The following is a 61-amino-acid chain: Small ribosomal subunit protein uS14 (61 aa).

Positions 24, 27, 40, and 43 each coordinate Zn(2+).

Belongs to the universal ribosomal protein uS14 family. Zinc-binding uS14 subfamily. Part of the 30S ribosomal subunit. Contacts proteins S3 and S10. Requires Zn(2+) as cofactor.

In terms of biological role, binds 16S rRNA, required for the assembly of 30S particles and may also be responsible for determining the conformation of the 16S rRNA at the A site. The chain is Small ribosomal subunit protein uS14 from Caldicellulosiruptor bescii (strain ATCC BAA-1888 / DSM 6725 / KCTC 15123 / Z-1320) (Anaerocellum thermophilum).